Here is a 217-residue protein sequence, read N- to C-terminus: Somatotropin (217 aa).

Residues 1 to 26 (MAPGSRTSLLLAFGLLCLPWLQEGSA) form the signal peptide. Residue histidine 44 coordinates Zn(2+). A disulfide bridge connects residues cysteine 79 and cysteine 191. Serine 132 carries the post-translational modification Phosphoserine. Zn(2+) is bound at residue glutamate 200. A disulfide bond links cysteine 208 and cysteine 215.

The protein belongs to the somatotropin/prolactin family.

It is found in the secreted. Its function is as follows. Plays an important role in growth control. Its major role in stimulating body growth is to stimulate the liver and other tissues to secrete IGF1. It stimulates both the differentiation and proliferation of myoblasts. It also stimulates amino acid uptake and protein synthesis in muscle and other tissues. The protein is Somatotropin (GH1) of Pan troglodytes (Chimpanzee).